The following is a 218-amino-acid chain: 3-isopropylmalate dehydratase small subunit (218 aa).

Belongs to the LeuD family. LeuD type 1 subfamily. As to quaternary structure, heterodimer of LeuC and LeuD.

It catalyses the reaction (2R,3S)-3-isopropylmalate = (2S)-2-isopropylmalate. Its pathway is amino-acid biosynthesis; L-leucine biosynthesis; L-leucine from 3-methyl-2-oxobutanoate: step 2/4. Its function is as follows. Catalyzes the isomerization between 2-isopropylmalate and 3-isopropylmalate, via the formation of 2-isopropylmaleate. This chain is 3-isopropylmalate dehydratase small subunit, found in Alkalilimnicola ehrlichii (strain ATCC BAA-1101 / DSM 17681 / MLHE-1).